The chain runs to 477 residues: Enolase 1, chloroplastic (477 aa).

A chloroplast-targeting transit peptide spans 1–41 (MALTTKPHHLQRSFLSPSRVSGERYLESAPSCLRFRRSGVQ). Positions 203 and 212 each coordinate substrate. Catalysis depends on glutamate 255, which acts as the Proton donor. Residues aspartate 290, glutamate 340, and aspartate 365 each contribute to the Mg(2+) site. Residues glutamate 340 and aspartate 365 each coordinate substrate. Lysine 390 (proton acceptor) is an active-site residue. Residues 417–420 (SHRS) and lysine 441 each bind substrate. Serine 476 bears the Phosphoserine mark.

The protein belongs to the enolase family. Mg(2+) serves as cofactor. As to expression, highly expressed in young roots, young siliques, and shoot apex. Lowly expressed in young leaves, stems and cotyledons.

The protein localises to the plastid. Its subcellular location is the chloroplast. It catalyses the reaction (2R)-2-phosphoglycerate = phosphoenolpyruvate + H2O. The protein operates within carbohydrate degradation; glycolysis; pyruvate from D-glyceraldehyde 3-phosphate: step 4/5. In Arabidopsis thaliana (Mouse-ear cress), this protein is Enolase 1, chloroplastic (ENO1).